The sequence spans 147 residues: MKVILKENIENLGHIGDIVKVAPGYARNYLLPKGFALEATTKNAKALDHAKKHLEYKKNKVLEQARVLAAKIEGLALNLSHQAGEEGKLFGAVTNMELAEQMKAQGIEIDRKKIILAEPIKHLGEFTATVKIHPEVNATLKVTVSKA.

The protein belongs to the bacterial ribosomal protein bL9 family.

Binds to the 23S rRNA. This chain is Large ribosomal subunit protein bL9, found in Geotalea uraniireducens (strain Rf4) (Geobacter uraniireducens).